A 388-amino-acid polypeptide reads, in one-letter code: Succinate--CoA ligase [ADP-forming] subunit beta (388 aa).

An ATP-grasp domain is found at 9–244; that stretch reads KQLFAEYGLP…PSQDDAREAH (236 aa). Residues lysine 46, 53–55, glutamate 99, threonine 102, and glutamate 107 each bind ATP; that span reads GRG. The Mg(2+) site is built by asparagine 199 and aspartate 213. Residues asparagine 264 and 321–323 contribute to the substrate site; that span reads GIV.

This sequence belongs to the succinate/malate CoA ligase beta subunit family. In terms of assembly, heterotetramer of two alpha and two beta subunits. It depends on Mg(2+) as a cofactor.

The catalysed reaction is succinate + ATP + CoA = succinyl-CoA + ADP + phosphate. It carries out the reaction GTP + succinate + CoA = succinyl-CoA + GDP + phosphate. It participates in carbohydrate metabolism; tricarboxylic acid cycle; succinate from succinyl-CoA (ligase route): step 1/1. Its function is as follows. Succinyl-CoA synthetase functions in the citric acid cycle (TCA), coupling the hydrolysis of succinyl-CoA to the synthesis of either ATP or GTP and thus represents the only step of substrate-level phosphorylation in the TCA. The beta subunit provides nucleotide specificity of the enzyme and binds the substrate succinate, while the binding sites for coenzyme A and phosphate are found in the alpha subunit. This chain is Succinate--CoA ligase [ADP-forming] subunit beta, found in Pseudomonas aeruginosa (strain LESB58).